A 421-amino-acid polypeptide reads, in one-letter code: UDP-N-acetylglucosamine 1-carboxyvinyltransferase (421 aa).

Residue 22–23 coordinates phosphoenolpyruvate; sequence KN. Residue Arg93 participates in UDP-N-acetyl-alpha-D-glucosamine binding. The active-site Proton donor is the Cys117. Residue Cys117 is modified to 2-(S-cysteinyl)pyruvic acid O-phosphothioketal. UDP-N-acetyl-alpha-D-glucosamine-binding positions include 122–126, Asp308, and Ile330; that span reads RPVDL.

Belongs to the EPSP synthase family. MurA subfamily.

The protein resides in the cytoplasm. It carries out the reaction phosphoenolpyruvate + UDP-N-acetyl-alpha-D-glucosamine = UDP-N-acetyl-3-O-(1-carboxyvinyl)-alpha-D-glucosamine + phosphate. Its pathway is cell wall biogenesis; peptidoglycan biosynthesis. Its function is as follows. Cell wall formation. Adds enolpyruvyl to UDP-N-acetylglucosamine. This chain is UDP-N-acetylglucosamine 1-carboxyvinyltransferase, found in Pseudomonas savastanoi pv. phaseolicola (strain 1448A / Race 6) (Pseudomonas syringae pv. phaseolicola (strain 1448A / Race 6)).